The sequence spans 130 residues: Phosphoribosyl-AMP cyclohydrolase (130 aa).

A Mg(2+)-binding site is contributed by Asp-77. Cys-78 contacts Zn(2+). 2 residues coordinate Mg(2+): Asp-79 and Asp-81. Zn(2+)-binding residues include Cys-95 and Cys-102.

This sequence belongs to the PRA-CH family. As to quaternary structure, homodimer. The cofactor is Mg(2+). Requires Zn(2+) as cofactor.

It is found in the cytoplasm. It carries out the reaction 1-(5-phospho-beta-D-ribosyl)-5'-AMP + H2O = 1-(5-phospho-beta-D-ribosyl)-5-[(5-phospho-beta-D-ribosylamino)methylideneamino]imidazole-4-carboxamide. The protein operates within amino-acid biosynthesis; L-histidine biosynthesis; L-histidine from 5-phospho-alpha-D-ribose 1-diphosphate: step 3/9. Catalyzes the hydrolysis of the adenine ring of phosphoribosyl-AMP. This Pseudomonas putida (strain ATCC 700007 / DSM 6899 / JCM 31910 / BCRC 17059 / LMG 24140 / F1) protein is Phosphoribosyl-AMP cyclohydrolase.